A 144-amino-acid polypeptide reads, in one-letter code: Deoxyuridine 5'-triphosphate nucleotidohydrolase (144 aa).

Substrate is bound by residues 63 to 65 (RSG), Asn76, and 80 to 82 (TVD).

The protein belongs to the dUTPase family. The cofactor is Mg(2+).

It carries out the reaction dUTP + H2O = dUMP + diphosphate + H(+). Its pathway is pyrimidine metabolism; dUMP biosynthesis; dUMP from dCTP (dUTP route): step 2/2. This enzyme is involved in nucleotide metabolism: it produces dUMP, the immediate precursor of thymidine nucleotides and it decreases the intracellular concentration of dUTP so that uracil cannot be incorporated into DNA. This chain is Deoxyuridine 5'-triphosphate nucleotidohydrolase, found in Flavobacterium johnsoniae (strain ATCC 17061 / DSM 2064 / JCM 8514 / BCRC 14874 / CCUG 350202 / NBRC 14942 / NCIMB 11054 / UW101) (Cytophaga johnsonae).